The primary structure comprises 396 residues: MSGIKKVVLAYSGGLDTSVILKWLAVTYNCEVVTLTADLGQEEDLDGVDDKAMRTGASRAYVEDLQEEFARDFIFPMMRAGAVYEGRYLLGTSIARPLIAKRLVEIARAEGAQAVAHGATGKGNDQVRFELAVNALAPDLRVIAPWREWDLRSRTQLNAFAEEHGIPISSSAKQYSMDRNMLHCSFEGGELEDPWNEPGPNSYVMAVPMEQAPDEAEYISIDFEHGNPVAVNGERLSPAALVKKLNSIGGRHGIGRLDMVENRFVGIKSRGVYETPGGTLIHIAHRDLEGICIDRETMHLRDAMLPRYAAAIYNGFWFAPEREAMQAMIDVSQQRVTGTVRLKLYKGNAWPVGRQSPNTLYCHDLATFEDCATYDHKDAAGFIKLQGLRIRGYKKG.

Residues 10–18 (AYSGGLDTS) and Ala-37 contribute to the ATP site. L-citrulline contacts are provided by Tyr-88 and Ser-93. Gly-118 provides a ligand contact to ATP. L-aspartate is bound by residues Thr-120, Asn-124, and Asp-125. Asn-124 contributes to the L-citrulline binding site. Residues Arg-128, Ser-176, Ser-185, Glu-261, and Tyr-273 each contribute to the L-citrulline site.

The protein belongs to the argininosuccinate synthase family. Type 1 subfamily. In terms of assembly, homotetramer.

The protein resides in the cytoplasm. It catalyses the reaction L-citrulline + L-aspartate + ATP = 2-(N(omega)-L-arginino)succinate + AMP + diphosphate + H(+). It participates in amino-acid biosynthesis; L-arginine biosynthesis; L-arginine from L-ornithine and carbamoyl phosphate: step 2/3. The sequence is that of Argininosuccinate synthase from Nitratidesulfovibrio vulgaris (strain ATCC 29579 / DSM 644 / CCUG 34227 / NCIMB 8303 / VKM B-1760 / Hildenborough) (Desulfovibrio vulgaris).